The sequence spans 215 residues: Ribonuclease T (215 aa).

One can recognise an Exonuclease domain in the interval valine 21–phenylalanine 195. Positions 24, 26, 182, and 187 each coordinate Mg(2+). Histidine 182 functions as the Proton donor/acceptor in the catalytic mechanism.

It belongs to the RNase T family. Homodimer. Requires Mg(2+) as cofactor.

In terms of biological role, trims short 3' overhangs of a variety of RNA species, leaving a one or two nucleotide 3' overhang. Responsible for the end-turnover of tRNA: specifically removes the terminal AMP residue from uncharged tRNA (tRNA-C-C-A). Also appears to be involved in tRNA biosynthesis. The protein is Ribonuclease T of Wigglesworthia glossinidia brevipalpis.